Reading from the N-terminus, the 477-residue chain is Ketoisovalerate oxidoreductase subunit VorA (477 aa).

Heterotrimer of the VorA, VorB and VorC subunits.

The catalysed reaction is 3-methyl-2-oxobutanoate + 2 oxidized [2Fe-2S]-[ferredoxin] + CoA = 2-methylpropanoyl-CoA + 2 reduced [2Fe-2S]-[ferredoxin] + CO2 + H(+). The polypeptide is Ketoisovalerate oxidoreductase subunit VorA (vorA) (Methanothermobacter thermautotrophicus (strain ATCC 29096 / DSM 1053 / JCM 10044 / NBRC 100330 / Delta H) (Methanobacterium thermoautotrophicum)).